The sequence spans 102 residues: Protamine-2 (102 aa).

The segment at 1–102 (MVRYRVRSPS…RTRRRTCRKH (102 aa)) is disordered. Residues Ser8, Ser10, and Ser37 each carry the phosphoserine modification. Positions 39 to 48 (EHVEVYERTH) are enriched in basic and acidic residues. Over residues 49 to 102 (GHSHYRRRHCSRRRLRRIHRQQHRSCRRRKRRSCRHRRRHRRGCRTRRRTCRKH) the composition is skewed to basic residues.

The protein belongs to the protamine P2 family. In terms of assembly, interacts with TDRP. Proteolytic processing into mature chains is required for histone eviction during spermatogenesis. Transition proteins (TNP1 and TNP2) are required for processing. Testis.

The protein localises to the nucleus. The protein resides in the chromosome. Functionally, protamines substitute for histones in the chromatin of sperm during the haploid phase of spermatogenesis. They compact sperm DNA into a highly condensed, stable and inactive complex. The polypeptide is Protamine-2 (PRM2) (Pan paniscus (Pygmy chimpanzee)).